Reading from the N-terminus, the 129-residue chain is Large ribosomal subunit protein bL12 (129 aa).

This sequence belongs to the bacterial ribosomal protein bL12 family. Homodimer. Part of the ribosomal stalk of the 50S ribosomal subunit. Forms a multimeric L10(L12)X complex, where L10 forms an elongated spine to which 2 to 4 L12 dimers bind in a sequential fashion. Binds GTP-bound translation factors.

Its function is as follows. Forms part of the ribosomal stalk which helps the ribosome interact with GTP-bound translation factors. Is thus essential for accurate translation. This chain is Large ribosomal subunit protein bL12, found in Protochlamydia amoebophila (strain UWE25).